The following is a 495-amino-acid chain: Cobyric acid synthase (495 aa).

The GATase cobBQ-type domain occupies 258 to 427; that stretch reads GLRVAAVRLP…WHGLFDNDGF (170 aa). C339 acts as the Nucleophile in catalysis. H419 is an active-site residue.

The protein belongs to the CobB/CobQ family. CobQ subfamily.

The protein operates within cofactor biosynthesis; adenosylcobalamin biosynthesis. In terms of biological role, catalyzes amidations at positions B, D, E, and G on adenosylcobyrinic A,C-diamide. NH(2) groups are provided by glutamine, and one molecule of ATP is hydrogenolyzed for each amidation. This chain is Cobyric acid synthase, found in Mycobacterium sp. (strain KMS).